Consider the following 338-residue polypeptide: tRNA N6-adenosine threonylcarbamoyltransferase (338 aa).

H111 and H115 together coordinate Fe cation. Substrate-binding positions include 134-138 (LVSGG), D167, G180, and N272. A Fe cation-binding site is contributed by D300.

It belongs to the KAE1 / TsaD family. Requires Fe(2+) as cofactor.

The protein localises to the cytoplasm. It catalyses the reaction L-threonylcarbamoyladenylate + adenosine(37) in tRNA = N(6)-L-threonylcarbamoyladenosine(37) in tRNA + AMP + H(+). Functionally, required for the formation of a threonylcarbamoyl group on adenosine at position 37 (t(6)A37) in tRNAs that read codons beginning with adenine. Is involved in the transfer of the threonylcarbamoyl moiety of threonylcarbamoyl-AMP (TC-AMP) to the N6 group of A37, together with TsaE and TsaB. TsaD likely plays a direct catalytic role in this reaction. This chain is tRNA N6-adenosine threonylcarbamoyltransferase, found in Nitrosomonas eutropha (strain DSM 101675 / C91 / Nm57).